The following is a 283-amino-acid chain: 4-diphosphocytidyl-2-C-methyl-D-erythritol kinase (283 aa).

K10 is an active-site residue. 99–109 provides a ligand contact to ATP; the sequence is PMGGGLGGGSS. Residue D141 is part of the active site.

This sequence belongs to the GHMP kinase family. IspE subfamily. Homodimer.

It catalyses the reaction 4-CDP-2-C-methyl-D-erythritol + ATP = 4-CDP-2-C-methyl-D-erythritol 2-phosphate + ADP + H(+). Its pathway is isoprenoid biosynthesis; isopentenyl diphosphate biosynthesis via DXP pathway; isopentenyl diphosphate from 1-deoxy-D-xylulose 5-phosphate: step 3/6. Its function is as follows. Catalyzes the phosphorylation of the position 2 hydroxy group of 4-diphosphocytidyl-2C-methyl-D-erythritol. This Shigella dysenteriae serotype 1 (strain Sd197) protein is 4-diphosphocytidyl-2-C-methyl-D-erythritol kinase.